Consider the following 381-residue polypeptide: Class E basic helix-loop-helix protein 22 (381 aa).

Disordered stretches follow at residues Arg30–Gly94, Arg135–Gly154, and His188–Ala242. Positions Gly82 to Gly94 are enriched in gly residues. Gly residues predominate over residues Gly198 to Gly225. In terms of domain architecture, bHLH spans Ala242–Gln296.

Interacts with PRDM8. In terms of tissue distribution, brain-specific, with the highest expression in the cerebellum.

The protein localises to the nucleus. Its function is as follows. Inhibits DNA binding of TCF3/E47 homodimers and TCF3 (E47)/NEUROD1 heterodimers and acts as a strong repressor of Neurod1 and Myod-responsive genes, probably by heterodimerization with class a basic helix-loop-helix factors. Despite the presence of an intact basic domain, does not bind to DNA. In the brain, may function as an area-specific transcription factor that regulates the postmitotic acquisition of area identities and elucidate the genetic hierarchy between progenitors and postmitotic neurons driving neocortical arealization. May be required for the survival of a specific population of inhibitory neurons in the superficial laminae of the spinal cord dorsal horn that may regulate pruritis. Seems to play a crucial role in the retinogenesis, in the specification of amacrine and bipolar subtypes. Forms with PRDM8 a transcriptional repressor complex controlling genes involved in neural development and neuronal differentiation. This is Class E basic helix-loop-helix protein 22 (BHLHE22) from Homo sapiens (Human).